The sequence spans 102 residues: NADH-quinone oxidoreductase subunit K (102 aa).

3 helical membrane passes run 5 to 25 (IAHY…GIFL), 31 to 51 (IVIL…FVAF), and 66 to 86 (FVLT…VVFF).

This sequence belongs to the complex I subunit 4L family. In terms of assembly, NDH-1 is composed of 14 different subunits. Subunits NuoA, H, J, K, L, M, N constitute the membrane sector of the complex.

The protein localises to the cell inner membrane. The enzyme catalyses a quinone + NADH + 5 H(+)(in) = a quinol + NAD(+) + 4 H(+)(out). Functionally, NDH-1 shuttles electrons from NADH, via FMN and iron-sulfur (Fe-S) centers, to quinones in the respiratory chain. The immediate electron acceptor for the enzyme in this species is believed to be ubiquinone. Couples the redox reaction to proton translocation (for every two electrons transferred, four hydrogen ions are translocated across the cytoplasmic membrane), and thus conserves the redox energy in a proton gradient. The protein is NADH-quinone oxidoreductase subunit K of Mesorhizobium japonicum (strain LMG 29417 / CECT 9101 / MAFF 303099) (Mesorhizobium loti (strain MAFF 303099)).